A 568-amino-acid chain; its full sequence is MPVLSEDSGLHETLALLTSQLRPDSNHREEMGFLRDVFSEKSLSYLMKIHEKLRYYERQSPTPVLHSAMALAEDVMEELQAASVHSDERELLQLLSTPHLRAVLMVHDTVAQKNFDPVLPPLPDNIDEDFEEESVKIVRLVKNKEPLGATIRRDEHSGAVVVARIMRGGAADRSGLVHVGDELREVNGIAVLHKRPDEISQILAQSQGSITLKIIPATQEEDRFKDSKVFMRALFHYDPREDRAIPCQEAGLPFQRRQVLEVVSQDDPTWWQAKRVGDTNLRAGLIPSKQFQERRLSYRRTTGTLPSPQNFKKPPYDQPCDKETCDCDGYFKGHYVAGLRRSFRLGCRERLGGSQEAKVPTGAESQVLLTYEEVARYQHQPGERPRLVVLIGSLGAHLHELKQRVVAEDPQQFAVAVPHTTRPRKSHERDGVEYHFVSKQAFEADVHHNKFLEHGEYKENLYGTSLEAIQAVMAKNKVCLVDVEPEALRHLRTPEFKPYVIFVKPAIQERRKTPPVSPDSEDIASSLDEQQQEMAASAAFIDQHYGHLIDTVLVRQDLQEPAASSELS.

L27 domains are found at residues 6–60 (EDSG…ERQS) and 61–118 (PTPV…FDPV). Residues 137–218 (IVRLVKNKEP…SITLKIIPAT (82 aa)) enclose the PDZ domain. Positions 226-296 (DSKVFMRALF…PSKQFQERRL (71 aa)) constitute an SH3 domain. The residue at position 307 (Ser307) is a Phosphoserine. A Guanylate kinase-like domain is found at 385 to 568 (PRLVVLIGSL…QEPAASSELS (184 aa)).

It belongs to the MAGUK family. As to quaternary structure, interacts with HTR2C; this interaction stabilizes the receptor at the plasma membrane and prevents the desensitization of the HTR2C receptor-mediated calcium response. Interacts with HTR2A. Interacts with HTR4. Interacts (via PDZ domain) with CADM1 (via C-terminus)Interacts (via PDZ domain) with CADM1; this interaction connects CADM1 with DLG1. Interacts (via Guanylate kinase-like domain) with PALS1. Interacts with DLG1 (via N-terminus); this interaction connects CADM1 with DLG1 and links CADM1 with the regulatory subunit of phosphoinositide-3-kinase (PI3K) by forming a multiprotein complex and participates in cell spreading. Expressed in brain, skeletal muscle, testis, kidney, and lung.

Its subcellular location is the apical cell membrane. It is found in the cell membrane. The protein resides in the cell junction. The protein localises to the adherens junction. Its function is as follows. Participates in cell spreading through the phosphoinositide-3-kinase (PI3K) pathway by connecting CADM1 to DLG1 and the regulatory subunit of phosphoinositide-3-kinase (PI3K). Stabilizes HTR2C at the plasma membrane and prevents its desensitization. May participates in the maintenance of adherens junctions. The polypeptide is MAGUK p55 subfamily member 3 (Mus musculus (Mouse)).